We begin with the raw amino-acid sequence, 353 residues long: Photosystem II D2 protein (353 aa).

The residue at position 2 (T2) is an N-acetylthreonine. Phosphothreonine is present on T2. Residues 41-61 traverse the membrane as a helical segment; sequence CAYFAVGGWFTGTTFVTSWYT. A chlorophyll a-binding site is contributed by H118. Residues 125–141 traverse the membrane as a helical segment; that stretch reads GFMLRQFELARSVQLRP. The pheophytin a site is built by Q130 and N143. Residues 153–166 traverse the membrane as a helical segment; the sequence is VFVSVFLIYPLGQS. Residue H198 participates in chlorophyll a binding. Residues 208 to 228 traverse the membrane as a helical segment; the sequence is AALLCAIHGATVENTLFEDGD. Positions 215 and 262 each coordinate a plastoquinone. H215 lines the Fe cation pocket. H269 provides a ligand contact to Fe cation. A helical membrane pass occupies residues 279 to 295; sequence GLWMSALGVVGLALNLR.

Belongs to the reaction center PufL/M/PsbA/D family. As to quaternary structure, PSII is composed of 1 copy each of membrane proteins PsbA, PsbB, PsbC, PsbD, PsbE, PsbF, PsbH, PsbI, PsbJ, PsbK, PsbL, PsbM, PsbT, PsbX, PsbY, PsbZ, Psb30/Ycf12, at least 3 peripheral proteins of the oxygen-evolving complex and a large number of cofactors. It forms dimeric complexes. The D1/D2 heterodimer binds P680, chlorophylls that are the primary electron donor of PSII, and subsequent electron acceptors. It shares a non-heme iron and each subunit binds pheophytin, quinone, additional chlorophylls, carotenoids and lipids. There is also a Cl(-1) ion associated with D1 and D2, which is required for oxygen evolution. The PSII complex binds additional chlorophylls, carotenoids and specific lipids. serves as cofactor.

It localises to the plastid. The protein resides in the chloroplast thylakoid membrane. It carries out the reaction 2 a plastoquinone + 4 hnu + 2 H2O = 2 a plastoquinol + O2. In terms of biological role, photosystem II (PSII) is a light-driven water:plastoquinone oxidoreductase that uses light energy to abstract electrons from H(2)O, generating O(2) and a proton gradient subsequently used for ATP formation. It consists of a core antenna complex that captures photons, and an electron transfer chain that converts photonic excitation into a charge separation. The D1/D2 (PsbA/PsbD) reaction center heterodimer binds P680, the primary electron donor of PSII as well as several subsequent electron acceptors. D2 is needed for assembly of a stable PSII complex. This Cucumis sativus (Cucumber) protein is Photosystem II D2 protein.